The sequence spans 312 residues: MALYEVYSHPALLRYRSSICSKATLFILIVLLLTYIPPLLVAFRSYGFWLKTSTYEEQPNVRFQYDVLLIALSSTTGNYLAWSTYPGFNNLVGDKLRLPHISAREEDRNQDGKMDLLNFQLELPLQPTDNIYGVQLILTFSYQLSKMSTFIMQSMALIQYSSPIPGSQLYMNGDLKLQQRQPLNHRGLDTTYNVSVINRSSPFASTYALTNIISSYQERNVTTVLNAPNPLWIVGRAASDPFVIKAVIRYPVESISYVPGFWEMLKYAWIQYVSILLIFLWVFERIKIFVFQNQVLTTVSGPIPSLYKSHQS.

Residues 23 to 43 (ATLFILIVLLLTYIPPLLVAF) form a helical membrane-spanning segment. N-linked (GlcNAc...) asparagine glycans are attached at residues Asn193 and Asn220. A helical transmembrane segment spans residues 263–283 (EMLKYAWIQYVSILLIFLWVF).

The protein belongs to the TMEM231 family. Part of the tectonic-like complex (also named B9 complex).

It is found in the cell projection. It localises to the cilium membrane. In terms of biological role, transmembrane component of the tectonic-like complex, a complex localized at the transition zone of primary cilia and acting as a barrier that prevents diffusion of transmembrane proteins between the cilia and plasma membranes. Required for ciliogenesis and sonic hedgehog/SHH signaling. The sequence is that of Transmembrane protein 231 (tmem231) from Xenopus tropicalis (Western clawed frog).